The primary structure comprises 556 residues: Glucomannan 4-beta-mannosyltransferase 7 (556 aa).

The helical transmembrane segment at 58–78 (VVVPVFKFLVLLCLVMSVMFF) threads the bilayer. Residue aspartate 158 is part of the active site. Aspartate 217 and aspartate 219 together coordinate substrate. Aspartate 311 is a catalytic residue. Helical transmembrane passes span 390 to 410 (IVAH…TVLF), 426 to 448 (LITL…WVLF), 502 to 522 (LLEL…IVYG), and 526 to 546 (LYVY…GFVG).

This sequence belongs to the glycosyltransferase 2 family. Plant cellulose synthase-like A subfamily. Ubiquitous.

Its subcellular location is the golgi apparatus membrane. It catalyses the reaction GDP-mannose + (glucomannan)n = GDP + (glucomannan)n+1.. Probable mannan synthase which consists of a 4-beta-mannosyltransferase activity on mannan using GDP-mannose. The beta-1,4-mannan product is the backbone for galactomannan synthesis by galactomannan galactosyltransferase. Galactomannan is a noncellulosic polysaccharides of plant cell wall. Required for synthesis of a cell wall polysaccharide essential for pollen tube growth, for cell wall structure, or for signaling during plant embryo development. The chain is Glucomannan 4-beta-mannosyltransferase 7 from Arabidopsis thaliana (Mouse-ear cress).